We begin with the raw amino-acid sequence, 299 residues long: Adenylate kinase (299 aa).

The interval 1 to 30 (MATTTTRGARDSPFPAPSEGEIKKELNMKG) is disordered. 85–90 (GAGKGT) is a binding site for ATP. The tract at residues 107 to 136 (ATGDMLREQVSKQTELGKMAKKIMDQGGLV) is NMP. AMP is bound by residues threonine 108, arginine 113, 134–136 (GLV), 163–166 (GFPR), and glutamine 170. Residues 204 to 241 (GRLVHPASGRSYHKEFSPPKKPMTDDVTGEPLIQRSDD) form an LID region. Residues arginine 205 and 214–215 (SY) each bind ATP. The tract at residues 212–237 (GRSYHKEFSPPKKPMTDDVTGEPLIQ) is disordered. Over residues 215 to 227 (YHKEFSPPKKPMT) the composition is skewed to basic and acidic residues. 2 residues coordinate AMP: arginine 238 and arginine 249. ATP is bound at residue glutamine 277.

It belongs to the adenylate kinase family. AK2 subfamily. Monomer.

The protein localises to the cytoplasm. Its subcellular location is the cytosol. It is found in the mitochondrion intermembrane space. The enzyme catalyses AMP + ATP = 2 ADP. Functionally, catalyzes the reversible transfer of the terminal phosphate group between ATP and AMP. Plays an important role in cellular energy homeostasis and in adenine nucleotide metabolism. Adenylate kinase activity is critical for regulation of the phosphate utilization and the AMP de novo biosynthesis pathways. This Mycosarcoma maydis (Corn smut fungus) protein is Adenylate kinase.